We begin with the raw amino-acid sequence, 674 residues long: MFIMSSISHAQLGWNDAGTPVSDQFDDVYFSNVNGLAETRYVFLEQNHLPQRWHNDDQRRFVIAETGFGTGLNFLAVWQAFVAFREANPDAKLKELHFISFEKYPLSKSDLIQAHQAWPELAQFAQKLHKHYPLAIPECQRIVLDDGLITLDLWFGDIKDCLPKVATQEQGLVDAWFLDGFAPSKNPEMWNQGLFAGMAKLAKHGCTCATFTSAGFVRRGLIDAGFAMKKVKGFGTKREMIAGSLSEKVPYTNIAPEFRFEATHGLQEVAIIGGGIASATLATTLARRGVAVTLYCADEKPAQGASGNRQGAVYPLLSGDHNAVSRVFAPAFLFARQWIEQAAEQINFDHDWCGVTQLMWDEKATDKLKSMLEGDFPTQLVRGLSAEQTNQQVGVPVDKASVHYPLGGWLCPAELTQGLIHLLAQQGKLTAHYQTPIDELTWQPETQLWQLRSGDTLMSHQCVVIASGHQFDSLSQTAELPLGKVKGQVSHIPTTETLSKINSVLCYDGYMTPVSQQNGYHCIGASYDRQHLDATFDPQAQRENAQKLIHCLPEQTWPLEVDVGGNQSRQGVRCVSRDHLPFVGNVGEFSKITEQYRDLAQQQEAEPIALYPQLYALVGLGSRGLSSAPLMAELLASQMCGDPMPLGVDLLEQLHPSRMWVRKLRKGKALTQKV.

The interval methionine 1–serine 246 is tRNA (mnm(5)s(2)U34)-methyltransferase. The segment at isoleucine 272 to valine 674 is FAD-dependent cmnm(5)s(2)U34 oxidoreductase.

It in the N-terminal section; belongs to the methyltransferase superfamily. tRNA (mnm(5)s(2)U34)-methyltransferase family. The protein in the C-terminal section; belongs to the DAO family. Requires FAD as cofactor.

Its subcellular location is the cytoplasm. It catalyses the reaction 5-aminomethyl-2-thiouridine(34) in tRNA + S-adenosyl-L-methionine = 5-methylaminomethyl-2-thiouridine(34) in tRNA + S-adenosyl-L-homocysteine + H(+). In terms of biological role, catalyzes the last two steps in the biosynthesis of 5-methylaminomethyl-2-thiouridine (mnm(5)s(2)U) at the wobble position (U34) in tRNA. Catalyzes the FAD-dependent demodification of cmnm(5)s(2)U34 to nm(5)s(2)U34, followed by the transfer of a methyl group from S-adenosyl-L-methionine to nm(5)s(2)U34, to form mnm(5)s(2)U34. The chain is tRNA 5-methylaminomethyl-2-thiouridine biosynthesis bifunctional protein MnmC from Vibrio cholerae serotype O1 (strain ATCC 39541 / Classical Ogawa 395 / O395).